A 674-amino-acid polypeptide reads, in one-letter code: Probable E3 ubiquitin ligase complex SCF subunit sconB (674 aa).

The disordered stretch occupies residues 1–96 (MATDTPPQLA…TTTTTSSSSS (96 aa)). A compositionally biased stretch (low complexity) spans 56 to 96 (AAAEAPETAALEPKSLFNSTSTESSITSSSTTTTTTSSSSS). Residues 212–258 (IDFVTALPPEISFKILSYLDTASLCNAAQVSRNWRHLADDDVVWHRM) form the F-box domain. 4 WD repeats span residues 336–375 (GHTN…RTLR), 377–415 (HEST…STYT), 416–453 (GHQG…TQIL), and 455–496 (GHTD…HTYA). Residues 518-544 (SHCDDDRSDRLSGSESPDHRASHDSNH) show a composition bias toward basic and acidic residues. Positions 518 to 561 (SHCDDDRSDRLSGSESPDHRASHDSNHAPDLPTTSAPPTQPMSP) are disordered. 3 WD repeats span residues 557 to 600 (QPMS…CLRT), 603 to 640 (GHIE…CERT), and 643 to 674 (GHRG…SFKA).

The protein belongs to the WD repeat MET30/SCONB/SCON-2 family. Component of the SCF(sconB) E3 ubiquitin ligase complex.

It participates in protein modification; protein ubiquitination. Component of the SCF(sconB) E3 ubiquitin ligase complex involved in the regulation of sulfur metabolite repression, probably by mediating the inactivation or degradation of the metR transcription factor. This chain is Probable E3 ubiquitin ligase complex SCF subunit sconB (sconB), found in Arthroderma otae (strain ATCC MYA-4605 / CBS 113480) (Microsporum canis).